The following is a 413-amino-acid chain: MKIYAVGGAIRDALLGLPVRDRDYVVVGATPEQMAAQRFRPVGKDFPVFLHPDTHEEYALARTERKTAAGYHGFQFYYAPDVTLEQDLVRRDLTINAMAREVSPDGALVGPVVDPFGGQADLRAKLFRHVGDAFVEDPVRILRVARFAARFAEFAVAPDTAALMRAMVDAGEVDALVPERVWQELARGLMEAKPSRMFAVLRECGALARILPEIDALFGVPQRADYHPEVDTGVHVMMVIDHAAKQGYSLPVRFAALTHDLGKATTPADVLPRHIGHEGRSVDLLKPLCERLRVPNECRDLALVVAREHGNLHRVMEMGAAALVRLLERADALRKPARFAEALQASEADARGRLGLETKPYPQAERLRQALVAARAVDAGAIAQGLAGEPAKIKDAVHRARVRAVAQAVGVAD.

The ATP site is built by Gly-8 and Arg-11. Gly-8 and Arg-11 together coordinate CTP. Asp-21 and Asp-23 together coordinate Mg(2+). ATP is bound by residues Arg-91, Arg-143, and Arg-146. Residues Arg-91, Arg-143, and Arg-146 each coordinate CTP. Residues 232 to 333 form the HD domain; the sequence is TGVHVMMVID…VRLLERADAL (102 aa).

This sequence belongs to the tRNA nucleotidyltransferase/poly(A) polymerase family. Bacterial CCA-adding enzyme type 1 subfamily. As to quaternary structure, monomer. Can also form homodimers and oligomers. The cofactor is Mg(2+). It depends on Ni(2+) as a cofactor.

It catalyses the reaction a tRNA precursor + 2 CTP + ATP = a tRNA with a 3' CCA end + 3 diphosphate. The enzyme catalyses a tRNA with a 3' CCA end + 2 CTP + ATP = a tRNA with a 3' CCACCA end + 3 diphosphate. Its function is as follows. Catalyzes the addition and repair of the essential 3'-terminal CCA sequence in tRNAs without using a nucleic acid template. Adds these three nucleotides in the order of C, C, and A to the tRNA nucleotide-73, using CTP and ATP as substrates and producing inorganic pyrophosphate. tRNA 3'-terminal CCA addition is required both for tRNA processing and repair. Also involved in tRNA surveillance by mediating tandem CCA addition to generate a CCACCA at the 3' terminus of unstable tRNAs. While stable tRNAs receive only 3'-terminal CCA, unstable tRNAs are marked with CCACCA and rapidly degraded. This Burkholderia mallei (strain NCTC 10247) protein is Multifunctional CCA protein.